A 396-amino-acid polypeptide reads, in one-letter code: Phosphopentomutase (396 aa).

Positions 13, 288, 293, 329, 330, and 341 each coordinate Mn(2+).

This sequence belongs to the phosphopentomutase family. It depends on Mn(2+) as a cofactor.

Its subcellular location is the cytoplasm. It catalyses the reaction 2-deoxy-alpha-D-ribose 1-phosphate = 2-deoxy-D-ribose 5-phosphate. The catalysed reaction is alpha-D-ribose 1-phosphate = D-ribose 5-phosphate. It participates in carbohydrate degradation; 2-deoxy-D-ribose 1-phosphate degradation; D-glyceraldehyde 3-phosphate and acetaldehyde from 2-deoxy-alpha-D-ribose 1-phosphate: step 1/2. In terms of biological role, isomerase that catalyzes the conversion of deoxy-ribose 1-phosphate (dRib-1-P) and ribose 1-phosphate (Rib-1-P) to deoxy-ribose 5-phosphate (dRib-5-P) and ribose 5-phosphate (Rib-5-P), respectively. The sequence is that of Phosphopentomutase from Clostridium botulinum (strain Alaska E43 / Type E3).